Reading from the N-terminus, the 300-residue chain is Acetylglutamate kinase (300 aa).

Residues 68 to 69 (GG), Arg90, and Asn195 contribute to the substrate site.

Belongs to the acetylglutamate kinase family. ArgB subfamily.

The protein resides in the cytoplasm. The catalysed reaction is N-acetyl-L-glutamate + ATP = N-acetyl-L-glutamyl 5-phosphate + ADP. It participates in amino-acid biosynthesis; L-arginine biosynthesis; N(2)-acetyl-L-ornithine from L-glutamate: step 2/4. Catalyzes the ATP-dependent phosphorylation of N-acetyl-L-glutamate. The polypeptide is Acetylglutamate kinase (Stutzerimonas stutzeri (strain A1501) (Pseudomonas stutzeri)).